A 1186-amino-acid chain; its full sequence is Pumilio homolog 1 (1186 aa).

S2 is subject to N-acetylserine. S19 carries the post-translational modification Phosphoserine. Residues 22 to 73 form a disordered region; that stretch reads LKHHPQEPANPNMPVVLTSGTGSQAQPQPAANQALAAGTHSSPVPGSIGVAG. Low complexity predominate over residues 45–58; it reads QAQPQPAANQALAA. 3 positions are modified to phosphoserine: S75, S98, and S106. At T112 the chain carries Phosphothreonine. S124, S159, S197, S209, and S229 each carry phosphoserine. Residues 233–272 form a disordered region; that stretch reads SCLRKGGFGPRDADSDENDKGEKKNKGTFDGDKLGDLKEE. Over residues 250-272 the composition is skewed to basic and acidic residues; that stretch reads NDKGEKKNKGTFDGDKLGDLKEE. S305 is subject to Phosphoserine. Residues 485 to 502 show a composition bias toward low complexity; that stretch reads TNSANQQTTPQAQQGQQQ. 2 disordered regions span residues 485–524 and 613–648; these read TNSANQQTTPQAQQGQQQVLRGGASQRPLTPNQNQQGQQT and AGTTNGPFRPLGTQQPQPQPQQQPNNNLASSSFYGN. Over residues 511–524 the composition is skewed to polar residues; sequence RPLTPNQNQQGQQT. A Phosphothreonine modification is found at T514. Residues 626-639 are compositionally biased toward low complexity; sequence QQPQPQPQQQPNNN. A phosphoserine mark is found at S709 and S714. The tract at residues 742-773 is disordered; sequence GPVGMPLPSQGPGHSQTPPPSLSSHGSSSSLN. Over residues 763 to 773 the composition is skewed to low complexity; that stretch reads LSSHGSSSSLN. Position 796 is an omega-N-methylarginine (R796). Phosphoserine occurs at positions 806 and 822. In terms of domain architecture, PUM-HD spans 828 to 1168; that stretch reads GRSRLLEDFR…HILAKLEKYY (341 aa). Pumilio repeat units lie at residues 848–883, 884–919, 920–955, 956–991, 992–1027, 1028–1063, 1064–1099, and 1103–1142; these read EIAGHIMEFSQDQHGSRFIQLKLERATPAERQLVFN, EILQAAYQLMVDVFGNYVIQKFFEFGSLEQKLALAE, RIRGHVLSLALQMYGCRVIQKALEFIPSDQQNEMVR, ELDGHVLKCVKDQNGNHVVQKCIECVQPQSLQFIID, AFKGQVFALSTHPYGCRVIQRILEHCLPDQTLPILE, ELHQHTEQLVQDQYGNYVIQHVLEHGRPEDKSKIVA, EIRGNVLVLSQHKFASNVVEKCVTHASRTERAVLID, and TMNDGPHSALYTMMKDQYANYVVQKMIDVAEPGQRKIVMH. The interval 863-867 is adenine-nucleotide binding in RNA target; that stretch reads SRFIQ. The uracil-nucleotide binding in RNA target stretch occupies residues 899 to 903; sequence NYVIQ. The interval 935–939 is adenine-nucleotide binding in RNA target; the sequence is CRVIQ. Residues 971–975 form a non-specific-nucleotide binding in RNA target region; sequence NHVVQ. The interval 1007–1011 is adenine-nucleotide binding in RNA target; sequence CRVIQ. The uracil-nucleotide binding in RNA target stretch occupies residues 1043–1047; the sequence is NYVIQ. Residues 1079–1083 are guanine-nucleotide binding in RNA target; sequence SNVVE. The interval 1122–1126 is uracil-nucleotide binding in RNA target; it reads NYVVQ.

As to quaternary structure, recruits the CCR4-POP2-NOT deadenylase leading to translational inhibition and mRNA degradation. In case of viral infection, interacts with DHX58. Interacts with TRIM71 (via NHL repeats) in an RNA-dependent manner. Post-translationally, phosphorylation at Ser-714 promotes RNA-binding activity. Following growth factor stimulation phosphorylated at Ser-714, promoting binding to the 3'-UTR of CDKN1B/p27 mRNA. Expressed in brain, heart, kidney, muscle, intestine and stomach. Not expressed in cerebellum, corpus callosum, caudate nucleus, hippocampus, medulla oblongata and putamen. Expressed in all fetal tissues tested.

It localises to the cytoplasm. It is found in the P-body. The protein resides in the cytoplasmic granule. In terms of biological role, sequence-specific RNA-binding protein that acts as a post-transcriptional repressor by binding the 3'-UTR of mRNA targets. Binds to an RNA consensus sequence, the Pumilio Response Element (PRE), 5'-UGUANAUA-3', that is related to the Nanos Response Element (NRE). Mediates post-transcriptional repression of transcripts via different mechanisms: acts via direct recruitment of the CCR4-POP2-NOT deadenylase leading to translational inhibition and mRNA degradation. Also mediates deadenylation-independent repression by promoting accessibility of miRNAs. Following growth factor stimulation, phosphorylated and binds to the 3'-UTR of CDKN1B/p27 mRNA, inducing a local conformational change that exposes miRNA-binding sites, promoting association of miR-221 and miR-222, efficient suppression of CDKN1B/p27 expression, and rapid entry to the cell cycle. Acts as a post-transcriptional repressor of E2F3 mRNAs by binding to its 3'-UTR and facilitating miRNA regulation. Represses a program of genes necessary to maintain genomic stability such as key mitotic, DNA repair and DNA replication factors. Its ability to repress those target mRNAs is regulated by the lncRNA NORAD (non-coding RNA activated by DNA damage) which, due to its high abundance and multitude of PUMILIO binding sites, is able to sequester a significant fraction of PUM1 and PUM2 in the cytoplasm. Involved in neuronal functions by regulating ATXN1 mRNA levels: acts by binding to the 3'-UTR of ATXN1 transcripts, leading to their down-regulation independently of the miRNA machinery. Plays a role in cytoplasmic sensing of viral infection. In testis, acts as a post-transcriptional regulator of spermatogenesis by binding to the 3'-UTR of mRNAs coding for regulators of p53/TP53. Involved in embryonic stem cell renewal by facilitating the exit from the ground state: acts by targeting mRNAs coding for naive pluripotency transcription factors and accelerates their down-regulation at the onset of differentiation. Binds specifically to miRNA MIR199A precursor, with PUM2, regulates miRNA MIR199A expression at a postranscriptional level. The protein is Pumilio homolog 1 of Homo sapiens (Human).